We begin with the raw amino-acid sequence, 160 residues long: uncharacterized protein (160 aa).

Helical transmembrane passes span 7 to 27 (IFLK…CIFL), 48 to 68 (LVFI…YQAF), 95 to 115 (AVTI…MAEI), and 121 to 141 (IIVI…FAAV).

Its subcellular location is the cell membrane. This is an uncharacterized protein from Bacillus subtilis (strain 168).